We begin with the raw amino-acid sequence, 276 residues long: Large ribosomal subunit protein uL2 (276 aa).

The disordered stretch occupies residues methionine 225–lysine 276. Residues lysine 257–lysine 276 are compositionally biased toward basic residues.

Belongs to the universal ribosomal protein uL2 family. As to quaternary structure, part of the 50S ribosomal subunit. Forms a bridge to the 30S subunit in the 70S ribosome.

Functionally, one of the primary rRNA binding proteins. Required for association of the 30S and 50S subunits to form the 70S ribosome, for tRNA binding and peptide bond formation. It has been suggested to have peptidyltransferase activity; this is somewhat controversial. Makes several contacts with the 16S rRNA in the 70S ribosome. The polypeptide is Large ribosomal subunit protein uL2 (Desulfitobacterium hafniense (strain DSM 10664 / DCB-2)).